A 553-amino-acid chain; its full sequence is Dihydroxy-acid dehydratase (553 aa).

Asp78 is a binding site for Mg(2+). Cys119 contacts [2Fe-2S] cluster. Residues Asp120 and Lys121 each contribute to the Mg(2+) site. The residue at position 121 (Lys121) is an N6-carboxylysine. Cys193 contributes to the [2Fe-2S] cluster binding site. Residue Glu441 participates in Mg(2+) binding. Catalysis depends on Ser467, which acts as the Proton acceptor.

This sequence belongs to the IlvD/Edd family. In terms of assembly, homodimer. The cofactor is [2Fe-2S] cluster. Mg(2+) serves as cofactor.

It carries out the reaction (2R)-2,3-dihydroxy-3-methylbutanoate = 3-methyl-2-oxobutanoate + H2O. It catalyses the reaction (2R,3R)-2,3-dihydroxy-3-methylpentanoate = (S)-3-methyl-2-oxopentanoate + H2O. Its pathway is amino-acid biosynthesis; L-isoleucine biosynthesis; L-isoleucine from 2-oxobutanoate: step 3/4. It functions in the pathway amino-acid biosynthesis; L-valine biosynthesis; L-valine from pyruvate: step 3/4. Functionally, functions in the biosynthesis of branched-chain amino acids. Catalyzes the dehydration of (2R,3R)-2,3-dihydroxy-3-methylpentanoate (2,3-dihydroxy-3-methylvalerate) into 2-oxo-3-methylpentanoate (2-oxo-3-methylvalerate) and of (2R)-2,3-dihydroxy-3-methylbutanoate (2,3-dihydroxyisovalerate) into 2-oxo-3-methylbutanoate (2-oxoisovalerate), the penultimate precursor to L-isoleucine and L-valine, respectively. This chain is Dihydroxy-acid dehydratase, found in Citrifermentans bemidjiense (strain ATCC BAA-1014 / DSM 16622 / JCM 12645 / Bem) (Geobacter bemidjiensis).